We begin with the raw amino-acid sequence, 353 residues long: Inactive ADP-ribosyltransferase ARH2 (353 aa).

Ser27 is modified (phosphoserine).

It belongs to the ADP-ribosylglycohydrolase family. As to expression, expressed in the embryonic heart at E11.5.

It is found in the cytoplasm. The protein localises to the myofibril. It localises to the sarcomere. Required for myofibril assembly and outgrowth of the cardiac chambers in the developing heart. Appears to be catalytically inactive, showing no activity against O-acetyl-ADP-ribose. In Mus musculus (Mouse), this protein is Inactive ADP-ribosyltransferase ARH2 (Adprhl1).